The primary structure comprises 204 residues: Uracil-DNA glycosylase (204 aa).

The active-site Proton acceptor is aspartate 47.

This sequence belongs to the uracil-DNA glycosylase (UDG) superfamily. UNG family.

Its subcellular location is the host nucleus. It carries out the reaction Hydrolyzes single-stranded DNA or mismatched double-stranded DNA and polynucleotides, releasing free uracil.. In terms of biological role, excises uracil residues from the DNA which can arise as a result of misincorporation of dUMP residues by DNA polymerase or deamination of cytosines. Therefore may reduce deleterious uracil incorporation into the viral genome, particularly in terminally differentiated cells which lack DNA repair enzymes. The polypeptide is Uracil-DNA glycosylase (UL2) (Bos taurus (Bovine)).